A 466-amino-acid polypeptide reads, in one-letter code: Asparagine--tRNA ligase (466 aa).

This sequence belongs to the class-II aminoacyl-tRNA synthetase family. As to quaternary structure, homodimer.

It is found in the cytoplasm. It carries out the reaction tRNA(Asn) + L-asparagine + ATP = L-asparaginyl-tRNA(Asn) + AMP + diphosphate + H(+). The chain is Asparagine--tRNA ligase from Photobacterium profundum (strain SS9).